A 973-amino-acid polypeptide reads, in one-letter code: Vacuolar membrane protease (973 aa).

At 1 to 15 (MARQYSRTNPLGFTP) the chain is on the cytoplasmic side. Residues 16-36 (WPVTIITALVYLALVIPLLVV) traverse the membrane as a helical segment. The Vacuolar portion of the chain corresponds to 37–383 (QHVVPSAPGS…STLAVFELHT (347 aa)). N-linked (GlcNAc...) asparagine glycans are attached at residues N52 and N115. Residues H167 and D179 each contribute to the Zn(2+) site. E213 acts as the Proton acceptor in catalysis. Zn(2+) is bound by residues E214, E239, and H312. Residues 384–404 (LFALSVTLLIVAPLVLLATSI) traverse the membrane as a helical segment. Residues 405 to 438 (ALVRADRMYLFRSTARVPGSDDFDEGVSLQGVRG) lie on the Cytoplasmic side of the membrane. A helical membrane pass occupies residues 439-459 (FFRFPFLLVIPTGVAVGLAYL). At 460 to 469 (VTKINPYIIH) the chain is on the vacuolar side. The helical transmembrane segment at 470–490 (SSEYAVWSMMISAWVFLAWFV) threads the bilayer. Topologically, residues 491 to 504 (SRVADFARPSAFHR) are cytoplasmic. A helical transmembrane segment spans residues 505–525 (VYVLTWMFVAEWVLLVIATVY). Over 526–529 (ENRY) the chain is Vacuolar. A helical membrane pass occupies residues 530–550 (GLAGGYFVFFALSGTFLATWI). Residues 551–674 (SYLELFALPR…GLPKWTWVLQ (124 aa)) are Cytoplasmic-facing. Residues 572 to 623 (SRYASNHGSRLGTSSGEHGMDDAEDEEDDDGDDEDEARNVEEEPTESTSLLR) are disordered. A compositionally biased stretch (polar residues) spans 574–587 (YASNHGSRLGTSSG). Acidic residues predominate over residues 593–607 (DAEDEEDDDGDDEDE). The helical transmembrane segment at 675–695 (FLLSAPIVLILVGPLALLLTA) threads the bilayer. The Vacuolar segment spans residues 696-708 (ALRQTAQDGSSPL). The chain crosses the membrane as a helical span at residues 709-729 (FVYIAIAVLTTLLVTPLLPFI). The Cytoplasmic portion of the chain corresponds to 730–735 (HRYTHH). The helical transmembrane segment at 736-756 (IPLFLLLVFTGTLIYNLVAFP) threads the bilayer. Residues 757–973 (FSPSNRLKLF…LVEGSRRFEV (217 aa)) lie on the Vacuolar side of the membrane. 2 N-linked (GlcNAc...) asparagine glycosylation sites follow: N803 and N839.

This sequence belongs to the peptidase M28 family. Zn(2+) is required as a cofactor.

It localises to the vacuole membrane. Its function is as follows. May be involved in vacuolar sorting and osmoregulation. This Aspergillus clavatus (strain ATCC 1007 / CBS 513.65 / DSM 816 / NCTC 3887 / NRRL 1 / QM 1276 / 107) protein is Vacuolar membrane protease.